A 793-amino-acid chain; its full sequence is Ferredoxin/F(420)H(2)-dependent CoB-CoM heterodisulfide reductase subunit A (793 aa).

FAD is bound at residue 147 to 170 (GGGVAGIEAALNLAEAGFPVTMVE). 4 4Fe-4S ferredoxin-type domains span residues 233–264 (RKPR…PMNY), 282–311 (QVVL…YEQK), 571–600 (MGAH…IENK), and 601–629 (KAVV…MRNF). [4Fe-4S] cluster contacts are provided by C243, C246, C250, C254, C291, C294, C297, C301, C580, C583, C586, C590, C609, C612, C615, and C619.

This sequence belongs to the HdrA family. The ferredoxin/F(420)H(2)-dependent CoB-CoM heterodisulfide reductase is composed of three subunits; HdrA2, HdrB2 and HdrC2. The cofactor is [4Fe-4S] cluster. [2Fe-2S] cluster is required as a cofactor. FAD serves as cofactor.

It is found in the cytoplasm. The catalysed reaction is coenzyme B + coenzyme M + 2 oxidized [2Fe-2S]-[ferredoxin] = coenzyme M-coenzyme B heterodisulfide + 2 reduced [2Fe-2S]-[ferredoxin] + 2 H(+). The enzyme catalyses coenzyme B + 2 oxidized coenzyme F420-(gamma-L-Glu)(n) + coenzyme M + 2 reduced [2Fe-2S]-[ferredoxin] + 4 H(+) = coenzyme M-coenzyme B heterodisulfide + 2 reduced coenzyme F420-(gamma-L-Glu)(n) + 2 oxidized [2Fe-2S]-[ferredoxin]. The protein operates within cofactor metabolism; coenzyme M-coenzyme B heterodisulfide reduction; coenzyme B and coenzyme M from coenzyme M-coenzyme B heterodisulfide: step 1/1. Its function is as follows. Part of a complex that catalyzes the reversible reduction of CoM-S-S-CoB to the thiol-coenzymes H-S-CoM (coenzyme M) and H-S-CoB (coenzyme B). Catalyzes the transfer of electrons from ferredoxin to CoM-S-S-CoB during methanogenesis from acetate. Electrons transfer from ferredoxin to CoM-S-S-CoB via HdrA2, HdrC2 and HdrB2. In addition, the complex can use electron bifurcation to direct electron pairs from reduced coenzyme F420 towards the reduction of both ferredoxin and CoB-CoM heterodisulfide. This activity may take place during Fe(III)-dependent anaerobic methane oxidation. This Methanosarcina acetivorans (strain ATCC 35395 / DSM 2834 / JCM 12185 / C2A) protein is Ferredoxin/F(420)H(2)-dependent CoB-CoM heterodisulfide reductase subunit A.